Consider the following 725-residue polypeptide: Eukaryotic translation initiation factor 3 subunit B (725 aa).

Residue Ser-23 is modified to Phosphoserine. In terms of domain architecture, RRM spans 39 to 129 (TVVVIEGAPV…HTFVVRKLNQ (91 aa)). Position 135 is a phosphoserine (Ser-135). Thr-136 carries the post-translational modification Phosphothreonine. WD repeat units follow at residues 190 to 229 (DREN…MCAR), 304 to 344 (DGKK…LVDK), and 347 to 386 (IKID…QPAR). Residues 630 to 671 (LTKEDMKKIRKKLKDYNRLFDEEDIAEQSSANRELAARRRQL) adopt a coiled-coil conformation.

Belongs to the eIF-3 subunit B family. Component of the eukaryotic translation initiation factor 3 (eIF-3) complex. The eIF-3 complex appears to include tif32/eif3a, SPAC25G10.08/eif3b, tif33/eif3c, SPBC4C3.07/eif3f, tif35/eif3g and sum1/eif3i. This set of common subunits may also associate exclusively with either moe1/eif3d and int6/eif3e, or with SPAC821.05/eif3h and SPAC1751.03/eif3m. The eIF-3 complex may also include SPAC3A12.13c/eif3j.

Its subcellular location is the cytoplasm. In terms of biological role, RNA-binding component of the eukaryotic translation initiation factor 3 (eIF-3) complex, which is involved in protein synthesis of a specialized repertoire of mRNAs and, together with other initiation factors, stimulates binding of mRNA and methionyl-tRNAi to the 40S ribosome. The eIF-3 complex specifically targets and initiates translation of a subset of mRNAs involved in cell proliferation. This chain is Eukaryotic translation initiation factor 3 subunit B, found in Schizosaccharomyces pombe (strain 972 / ATCC 24843) (Fission yeast).